A 328-amino-acid chain; its full sequence is MEIVWEVLFLLQANFIVCISAQQNSPKIHEGWWAYKEVVQGSFVPVPSFWGLVNSAWNLCSVGKRQSPVNIETSHMIFDPFLTPLRINTGGRKVSGTMYNTGRHVSLRLDKEHLVNISGGPMTYSHRLEEIRLHFGSEDSQGSEHLLNGQAFSGEVQLIHYNHELYTNVTEAAKSPNGLVVVSIFIKVSDSSNPFLNRMLNRDTITRITYKNDAYLLQGLNIEELYPETSSFITYDGSMTIPPCYETANWIIMNKPVYITRMQMHSLRLLSQNQPSQIFLSMSDNFRPVQSLNNRCIRTNINFSLQGKDCPNNRAQKLQYRVNEWLLK.

Residues 31–301 (GWWAYKEVVQ…LNNRCIRTNI (271 aa)) form the Alpha-carbonic anhydrase domain.

This sequence belongs to the alpha-carbonic anhydrase family.

Does not have a catalytic activity. The chain is Carbonic anhydrase-related protein 10 (CA10) from Bos taurus (Bovine).